Consider the following 105-residue polypeptide: Large ribosomal subunit protein uL24 (105 aa).

Belongs to the universal ribosomal protein uL24 family. Part of the 50S ribosomal subunit.

One of two assembly initiator proteins, it binds directly to the 5'-end of the 23S rRNA, where it nucleates assembly of the 50S subunit. In terms of biological role, one of the proteins that surrounds the polypeptide exit tunnel on the outside of the subunit. The polypeptide is Large ribosomal subunit protein uL24 (Clostridium botulinum (strain Langeland / NCTC 10281 / Type F)).